The chain runs to 256 residues: Thiazole synthase (256 aa).

Catalysis depends on Lys95, which acts as the Schiff-base intermediate with DXP. Residues Gly156, 182 to 183, and 204 to 205 each bind 1-deoxy-D-xylulose 5-phosphate; these read AG and NT.

Belongs to the ThiG family. As to quaternary structure, homotetramer. Forms heterodimers with either ThiH or ThiS.

Its subcellular location is the cytoplasm. The enzyme catalyses [ThiS sulfur-carrier protein]-C-terminal-Gly-aminoethanethioate + 2-iminoacetate + 1-deoxy-D-xylulose 5-phosphate = [ThiS sulfur-carrier protein]-C-terminal Gly-Gly + 2-[(2R,5Z)-2-carboxy-4-methylthiazol-5(2H)-ylidene]ethyl phosphate + 2 H2O + H(+). The protein operates within cofactor biosynthesis; thiamine diphosphate biosynthesis. Catalyzes the rearrangement of 1-deoxy-D-xylulose 5-phosphate (DXP) to produce the thiazole phosphate moiety of thiamine. Sulfur is provided by the thiocarboxylate moiety of the carrier protein ThiS. In vitro, sulfur can be provided by H(2)S. In Shigella boydii serotype 18 (strain CDC 3083-94 / BS512), this protein is Thiazole synthase.